The sequence spans 71 residues: Large ribosomal subunit protein bL31 (71 aa).

Zn(2+)-binding residues include C16, C18, C38, and C41.

It belongs to the bacterial ribosomal protein bL31 family. Type A subfamily. As to quaternary structure, part of the 50S ribosomal subunit. The cofactor is Zn(2+).

Binds the 23S rRNA. The polypeptide is Large ribosomal subunit protein bL31 (Francisella tularensis subsp. novicida (strain U112)).